The chain runs to 586 residues: uncharacterized protein (586 aa).

The ABC transmembrane type-1 domain maps to 29–312; it reads YGIAIGSMVV…LARMRISLES (284 aa). A run of 4 helical transmembrane segments spans residues 30–50, 66–86, 162–184, and 256–276; these read GIAI…AWIM, VFGV…ATYV, MVIQ…ILGV, and IMET…GVLV. The ABC transporter domain occupies 346 to 580; the sequence is IRFKDVNFSY…DGVYRRLYEL (235 aa). Residue 379–386 participates in ATP binding; sequence GPSGAGKS.

The protein belongs to the ABC transporter superfamily.

It is found in the cell membrane. This is an uncharacterized protein from Sinorhizobium fredii (strain NBRC 101917 / NGR234).